Here is a 380-residue protein sequence, read N- to C-terminus: Alkanesulfonate monooxygenase (380 aa).

The protein belongs to the SsuD family. In terms of assembly, homotetramer.

The catalysed reaction is an alkanesulfonate + FMNH2 + O2 = an aldehyde + FMN + sulfite + H2O + 2 H(+). Catalyzes the desulfonation of aliphatic sulfonates. This is Alkanesulfonate monooxygenase from Pectobacterium carotovorum subsp. carotovorum (strain PC1).